We begin with the raw amino-acid sequence, 291 residues long: ATP synthase gamma chain (291 aa).

Belongs to the ATPase gamma chain family. In terms of assembly, F-type ATPases have 2 components, CF(1) - the catalytic core - and CF(0) - the membrane proton channel. CF(1) has five subunits: alpha(3), beta(3), gamma(1), delta(1), epsilon(1). CF(0) has three main subunits: a, b and c.

The protein localises to the cell membrane. Produces ATP from ADP in the presence of a proton gradient across the membrane. The gamma chain is believed to be important in regulating ATPase activity and the flow of protons through the CF(0) complex. The sequence is that of ATP synthase gamma chain from Streptococcus pyogenes serotype M3 (strain ATCC BAA-595 / MGAS315).